The following is a 273-amino-acid chain: Putative ankyrin repeat protein RBE_0317 (273 aa).

5 ANK repeats span residues 31 to 60 (LGKEIFPIATFFDKNDIIRTLMEEKIDFYS), 93 to 123 (NGNTLLHAAIDQGKSEVVKFLTSYKNLEVNT), 127 to 157 (GGNSPLHLAIKSNNPEIVEMLLSYENINVNE), 161 to 191 (YGDTTLHKAIRSYNHKIIEMLLLREEIDVNE), and 195 to 225 (QGETPLHGAVKSNRPEIVKMLLSHKNMDTKQ).

The polypeptide is Putative ankyrin repeat protein RBE_0317 (Rickettsia bellii (strain RML369-C)).